The chain runs to 179 residues: Gamma-crystallin S (179 aa).

Serine 2 is subject to N-acetylserine. Positions 2 to 5 (SKTG) are N-terminal arm. 2 consecutive Beta/gamma crystallin 'Greek key' domains span residues 6-44 (TKIT…RVEG) and 45-87 (GTWA…RALH). A connecting peptide region spans residues 88-93 (LSSGGQ). Beta/gamma crystallin 'Greek key' domains follow at residues 94-134 (YKIQ…KVLD) and 135-177 (GAWI…RRIV).

The protein belongs to the beta/gamma-crystallin family. In terms of assembly, monomer.

Crystallins are the dominant structural components of the vertebrate eye lens. This is Gamma-crystallin S (CRYGS) from Oryctolagus cuniculus (Rabbit).